Reading from the N-terminus, the 314-residue chain is Regulator of microtubule dynamics protein 1 (314 aa).

At Lys-165 the chain carries N6-succinyllysine. TPR repeat units follow at residues Ala-168 to Asp-204 and Pro-222 to Phe-258.

It belongs to the RMDN family. In terms of assembly, interacts with microtubules.

The protein resides in the cytoplasm. The protein localises to the cytoskeleton. It localises to the spindle. Its subcellular location is the spindle pole. This is Regulator of microtubule dynamics protein 1 (RMDN1) from Pongo abelii (Sumatran orangutan).